A 464-amino-acid chain; its full sequence is CRISPR system endoribonuclease Csm6 (464 aa).

Positions 1–190 (MEDLDALWER…LRILPNPHEA (190 aa)) are CARF domain. The HEPN domain stretch occupies residues 191–464 (LAEVDALFAK…LSPEPVPLGF (274 aa)).

This sequence belongs to the CRISPR-associated Csm6 family. As to quaternary structure, homodimer. The protein forms a twisted, head-to-head dimer; the composite ssRNase active site is formed at the dimer interface. Does not require a metal cofactor. serves as cofactor.

Non-specific ssRNase activity is allosterically activated about 1000-fold by cyclic tetraadenylate (cA4), which probably binds to its CARF domain. In terms of biological role, CRISPR (clustered regularly interspaced short palindromic repeat) is an adaptive immune system that provides protection against mobile genetic elements (viruses, transposable elements and conjugative plasmids). CRISPR clusters contain spacers, sequences complementary to antecedent mobile elements, and target invading nucleic acids. CRISPR clusters are transcribed and processed into CRISPR RNA (crRNA). The type III-A Csm effector complex binds crRNA and acts as a crRNA-guided RNase, DNase and cyclic oligoadenylate synthase; binding of target RNA cognate to the crRNA is required for all activities. This protein is not part of the Csm effector complex. Its function is as follows. A single-strand-specific endoribonuclease (ssRNase) producing free 5'-OH. Activity is approximately 1000-fold stimulated by cyclic oligoadenylate (cOA); only cyclic tetraadenylate (cA4) stimulates the ssRNase activity while linear oligoadenylates do not activate the RNase. Another study showed stimulation by linear tetraadenylate at very high concentrations, but did not examine stimulation by cA4. This chain is CRISPR system endoribonuclease Csm6, found in Thermus thermophilus (strain ATCC 27634 / DSM 579 / HB8).